The sequence spans 95 residues: Aspartyl/glutamyl-tRNA(Asn/Gln) amidotransferase subunit C (95 aa).

This sequence belongs to the GatC family. Heterotrimer of A, B and C subunits.

It carries out the reaction L-glutamyl-tRNA(Gln) + L-glutamine + ATP + H2O = L-glutaminyl-tRNA(Gln) + L-glutamate + ADP + phosphate + H(+). The enzyme catalyses L-aspartyl-tRNA(Asn) + L-glutamine + ATP + H2O = L-asparaginyl-tRNA(Asn) + L-glutamate + ADP + phosphate + 2 H(+). Its function is as follows. Allows the formation of correctly charged Asn-tRNA(Asn) or Gln-tRNA(Gln) through the transamidation of misacylated Asp-tRNA(Asn) or Glu-tRNA(Gln) in organisms which lack either or both of asparaginyl-tRNA or glutaminyl-tRNA synthetases. The reaction takes place in the presence of glutamine and ATP through an activated phospho-Asp-tRNA(Asn) or phospho-Glu-tRNA(Gln). This chain is Aspartyl/glutamyl-tRNA(Asn/Gln) amidotransferase subunit C, found in Rhizobium johnstonii (strain DSM 114642 / LMG 32736 / 3841) (Rhizobium leguminosarum bv. viciae).